Consider the following 148-residue polypeptide: Phage-like element PBSX protein XkdN (148 aa).

It to B.subtilis YqbN.

The sequence is that of Phage-like element PBSX protein XkdN (xkdN) from Bacillus subtilis (strain 168).